A 298-amino-acid chain; its full sequence is 33 kDa chaperonin (298 aa).

2 disulfides stabilise this stretch: C237/C239 and C270/C273.

Belongs to the HSP33 family. Post-translationally, under oxidizing conditions two disulfide bonds are formed involving the reactive cysteines. Under reducing conditions zinc is bound to the reactive cysteines and the protein is inactive.

It is found in the cytoplasm. Its function is as follows. Redox regulated molecular chaperone. Protects both thermally unfolding and oxidatively damaged proteins from irreversible aggregation. Plays an important role in the bacterial defense system toward oxidative stress. In Enterococcus faecalis (strain ATCC 700802 / V583), this protein is 33 kDa chaperonin.